We begin with the raw amino-acid sequence, 197 residues long: Ribonuclease HII (197 aa).

Positions 11-197 constitute an RNase H type-2 domain; that stretch reads NLIAGVDEVG…FAPVRKILGL (187 aa). A divalent metal cation contacts are provided by aspartate 17, glutamate 18, and aspartate 109.

This sequence belongs to the RNase HII family. It depends on Mn(2+) as a cofactor. Requires Mg(2+) as cofactor.

It localises to the cytoplasm. It catalyses the reaction Endonucleolytic cleavage to 5'-phosphomonoester.. In terms of biological role, endonuclease that specifically degrades the RNA of RNA-DNA hybrids. The protein is Ribonuclease HII of Haemophilus ducreyi (strain 35000HP / ATCC 700724).